Here is a 301-residue protein sequence, read N- to C-terminus: GTPase Era (301 aa).

The Era-type G domain occupies 7 to 175 (YCGFVAIVGR…AAIVRKHLPE (169 aa)). Residues 15–22 (GRPNVGKS) are G1. 15-22 (GRPNVGKS) contacts GTP. Residues 41 to 45 (QTTRH) are G2. The tract at residues 62–65 (DTPG) is G3. Residues 62–66 (DTPGL) and 124–127 (NKVD) each bind GTP. Residues 124-127 (NKVD) are G4. The segment at 154-156 (ISA) is G5. The KH type-2 domain maps to 206–283 (LGAELPYSVT…HLELWVKVKS (78 aa)).

The protein belongs to the TRAFAC class TrmE-Era-EngA-EngB-Septin-like GTPase superfamily. Era GTPase family. In terms of assembly, monomer.

It is found in the cytoplasm. Its subcellular location is the cell inner membrane. An essential GTPase that binds both GDP and GTP, with rapid nucleotide exchange. Plays a role in 16S rRNA processing and 30S ribosomal subunit biogenesis and possibly also in cell cycle regulation and energy metabolism. This chain is GTPase Era, found in Klebsiella pneumoniae subsp. pneumoniae (strain ATCC 700721 / MGH 78578).